The primary structure comprises 571 residues: Vesicle-associated protein 1-4 (571 aa).

One can recognise an MSP 1 domain in the interval 1–126 (MSTDELLTFD…EETIFKIIYV (126 aa)). The disordered stretch occupies residues 132–154 (QSPVQEGLEDGSSPSASVSDKGN). Residues 143-153 (SSPSASVSDKG) are compositionally biased toward polar residues. The MSP 2 domain occupies 176–296 (LLIIDPVDVQ…EETRLKVMYV (121 aa)). The interval 297 to 322 (TPPQPPSPVQEGTEEGSSPRASVSDN) is disordered. The segment covering 311–322 (EGSSPRASVSDN) has biased composition (polar residues). A TIR domain is found at 356 to 493 (PQYQVFINFR…KWKEALSSVF (138 aa)). Residue Glu430 is part of the active site.

The protein belongs to the VAMP-associated protein (VAP) (TC 9.B.17) family.

The enzyme catalyses NAD(+) + H2O = ADP-D-ribose + nicotinamide + H(+). May play a role in vesicle trafficking. In Arabidopsis thaliana (Mouse-ear cress), this protein is Vesicle-associated protein 1-4 (PVA14).